Here is a 95-residue protein sequence, read N- to C-terminus: Large ribosomal subunit protein eL31 (95 aa).

This sequence belongs to the eukaryotic ribosomal protein eL31 family.

The chain is Large ribosomal subunit protein eL31 (rpl31e) from Pyrococcus horikoshii (strain ATCC 700860 / DSM 12428 / JCM 9974 / NBRC 100139 / OT-3).